A 308-amino-acid polypeptide reads, in one-letter code: Folate transporter 1, chloroplastic (308 aa).

Solcar repeat units lie at residues 4–94, 104–192, and 213–299; these read SWQW…AKQR, LSPA…LRKI, and ADYA…VLKL. 6 helical membrane passes run 10 to 30, 74 to 91, 110 to 130, 164 to 184, 216 to 236, and 274 to 293; these read ATAG…LDVV, VIGS…YGRA, LASA…IWLV, ALYK…IQFT, AALG…FQVI, and GLTA…FIVY.

Belongs to the mitochondrial carrier (TC 2.A.29) family. In terms of tissue distribution, ubiquitous.

The protein localises to the plastid. Its subcellular location is the chloroplast membrane. Mediates folate import into chloroplast. This Arabidopsis thaliana (Mouse-ear cress) protein is Folate transporter 1, chloroplastic (FOLT1).